Here is a 300-residue protein sequence, read N- to C-terminus: UDP-N-acetylenolpyruvoylglucosamine reductase (300 aa).

Residues 27–216 (RVGGPADVIF…TERREKTQPI (190 aa)) enclose the FAD-binding PCMH-type domain. Arg172 is a catalytic residue. Ser223 (proton donor) is an active-site residue. Residue Glu293 is part of the active site.

The protein belongs to the MurB family. FAD is required as a cofactor.

It is found in the cytoplasm. The enzyme catalyses UDP-N-acetyl-alpha-D-muramate + NADP(+) = UDP-N-acetyl-3-O-(1-carboxyvinyl)-alpha-D-glucosamine + NADPH + H(+). It participates in cell wall biogenesis; peptidoglycan biosynthesis. Functionally, cell wall formation. This chain is UDP-N-acetylenolpyruvoylglucosamine reductase, found in Phenylobacterium zucineum (strain HLK1).